We begin with the raw amino-acid sequence, 235 residues long: Large ribosomal subunit protein uL1 (235 aa).

Belongs to the universal ribosomal protein uL1 family. As to quaternary structure, part of the 50S ribosomal subunit.

Functionally, binds directly to 23S rRNA. The L1 stalk is quite mobile in the ribosome, and is involved in E site tRNA release. In terms of biological role, protein L1 is also a translational repressor protein, it controls the translation of the L11 operon by binding to its mRNA. The sequence is that of Large ribosomal subunit protein uL1 from Mycobacterium marinum (strain ATCC BAA-535 / M).